Reading from the N-terminus, the 351-residue chain is Cell shape-determining protein MreB (351 aa).

Residues 20–22, 169–171, 217–220, and 299–302 contribute to the ATP site; these read TAN, GGT, ERIK, and GGAL.

It belongs to the FtsA/MreB family. In terms of assembly, forms polymers.

It localises to the cytoplasm. Forms membrane-associated dynamic filaments that are essential for cell shape determination. Acts by regulating cell wall synthesis and cell elongation, and thus cell shape. A feedback loop between cell geometry and MreB localization may maintain elongated cell shape by targeting cell wall growth to regions of negative cell wall curvature. This is Cell shape-determining protein MreB from Haemophilus influenzae (strain ATCC 51907 / DSM 11121 / KW20 / Rd).